Here is a 283-residue protein sequence, read N- to C-terminus: ATP phosphoribosyltransferase (283 aa).

The protein belongs to the ATP phosphoribosyltransferase family. Long subfamily. It depends on Mg(2+) as a cofactor.

It is found in the cytoplasm. It carries out the reaction 1-(5-phospho-beta-D-ribosyl)-ATP + diphosphate = 5-phospho-alpha-D-ribose 1-diphosphate + ATP. It functions in the pathway amino-acid biosynthesis; L-histidine biosynthesis; L-histidine from 5-phospho-alpha-D-ribose 1-diphosphate: step 1/9. Its activity is regulated as follows. Feedback inhibited by histidine. Its function is as follows. Catalyzes the condensation of ATP and 5-phosphoribose 1-diphosphate to form N'-(5'-phosphoribosyl)-ATP (PR-ATP). Has a crucial role in the pathway because the rate of histidine biosynthesis seems to be controlled primarily by regulation of HisG enzymatic activity. The polypeptide is ATP phosphoribosyltransferase (Bifidobacterium longum subsp. infantis (strain ATCC 15697 / DSM 20088 / JCM 1222 / NCTC 11817 / S12)).